The primary structure comprises 773 residues: Beta-D-xylosidase 3 (773 aa).

An N-terminal signal peptide occupies residues 1-23 (MASRNRALFSVSTLFLCFIVCIS). Asn-131 is a glycosylation site (N-linked (GlcNAc...) asparagine). Asp-298 is a catalytic residue. Residues Asn-349, Asn-432, and Asn-770 are each glycosylated (N-linked (GlcNAc...) asparagine).

The protein belongs to the glycosyl hydrolase 3 family. Expressed in flowers and siliques, in the early stage of seed formation and not at seed maturation. Detected exclusively in the endosperm of very young seeds when the embryo is at the globular stage.

The protein resides in the secreted. It is found in the extracellular space. The protein localises to the extracellular matrix. It catalyses the reaction Hydrolysis of terminal non-reducing alpha-L-arabinofuranoside residues in alpha-L-arabinosides.. Involved in the hydrolysis of arabinan. Can hydrolyze (1,3)-alpha-, (1,2)-alpha-linked side group residues and non-reducing terminal L-arabinofuranose residues of debranched (1,5)-alpha-L-arabinan backbone. Also acts as a beta-D-xylosidase, releasing D-xylose from arabinoxylan and xylan. This is Beta-D-xylosidase 3 (BXL3) from Arabidopsis thaliana (Mouse-ear cress).